A 980-amino-acid polypeptide reads, in one-letter code: Peroxisomal ATPase PEX6 (980 aa).

Arginine 119 carries the omega-N-methylarginine modification. Residues 470 to 477 (GPPGSGKT) and 744 to 751 (GPPGTGKT) each bind ATP.

It belongs to the AAA ATPase family. In terms of assembly, interacts with PEX1; forming the PEX1-PEX6 AAA ATPase complex, which is composed of a heterohexamer formed by a trimer of PEX1-PEX6 dimers. Interacts with PEX26; interaction is direct and promotes recruitment to peroxisomal membranes. Interacts with ZFAND6.

It is found in the cytoplasm. The protein resides in the cytosol. The protein localises to the peroxisome membrane. Its subcellular location is the cell projection. It localises to the cilium. It is found in the photoreceptor outer segment. It carries out the reaction ATP + H2O = ADP + phosphate + H(+). Its function is as follows. Component of the PEX1-PEX6 AAA ATPase complex, a protein dislocase complex that mediates the ATP-dependent extraction of the PEX5 receptor from peroxisomal membranes, an essential step for PEX5 recycling. Specifically recognizes PEX5 monoubiquitinated at 'Cys-11', and pulls it out of the peroxisome lumen through the PEX2-PEX10-PEX12 retrotranslocation channel. Extraction by the PEX1-PEX6 AAA ATPase complex is accompanied by unfolding of the TPR repeats and release of bound cargo from PEX5. The chain is Peroxisomal ATPase PEX6 from Cricetulus griseus (Chinese hamster).